Consider the following 126-residue polypeptide: Class I hydrophobin 1 (126 aa).

The first 16 residues, 1-16, serve as a signal peptide directing secretion; the sequence is MQYMTIVAFLAATVAA. 4 disulfide bridges follow: Cys-38–Cys-100, Cys-46–Cys-94, Cys-47–Cys-75, and Cys-101–Cys-119.

Belongs to the fungal hydrophobin family.

It localises to the secreted. The protein localises to the cell wall. Its function is as follows. Aerial growth, conidiation, and dispersal of filamentous fungi in the environment rely upon a capability of their secreting small amphipathic proteins called hydrophobins (HPBs) with low sequence identity. Class I can self-assemble into an outermost layer of rodlet bundles on aerial cell surfaces, conferring cellular hydrophobicity that supports fungal growth, development and dispersal; whereas Class II form highly ordered films at water-air interfaces through intermolecular interactions but contribute nothing to the rodlet structure. HYD1 and HYD2 are required for the structural integrity of the long aerial chains of microconidia. Does not seem to be important for the ability to cause seedling disease. This Gibberella moniliformis (Maize ear and stalk rot fungus) protein is Class I hydrophobin 1.